We begin with the raw amino-acid sequence, 24 residues long: Humanin-like 12 (24 aa).

It belongs to the humanin family.

The protein localises to the secreted. It localises to the cytoplasm. Its function is as follows. Plays a role as a neuroprotective and antiapoptotic factor. The sequence is that of Humanin-like 12 from Homo sapiens (Human).